Consider the following 156-residue polypeptide: Ribonuclease pancreatic (156 aa).

Positions 1-28 are cleaved as a signal peptide; that stretch reads MALEKSLALLPLLVLVLLVLGWVQPSLG. Positions 33-43 are enriched in basic and acidic residues; that stretch reads AKKFQRQHMDS. Residues 33 to 52 form a disordered region; that stretch reads AKKFQRQHMDSDGSPSSNPT. 2 residues coordinate substrate: lysine 35 and arginine 38. The active-site Proton acceptor is histidine 40. Cystine bridges form between cysteine 54/cysteine 112, cysteine 68/cysteine 123, cysteine 86/cysteine 138, and cysteine 93/cysteine 100. Asparagine 62 is a glycosylation site (N-linked (GlcNAc...) asparagine). 69–73 is a binding site for substrate; that stretch reads KPVNT. Asparagine 90 is a glycosylation site (N-linked (GlcNAc...) asparagine). 2 residues coordinate substrate: lysine 94 and arginine 113. Residue asparagine 116 is glycosylated (N-linked (GlcNAc...) asparagine). The active-site Proton donor is histidine 147.

It belongs to the pancreatic ribonuclease family. Monomer. Interacts with and forms tight 1:1 complexes with RNH1. Dimerization of two such complexes may occur. Interaction with RNH1 inhibits this protein.

The protein localises to the secreted. The catalysed reaction is an [RNA] containing cytidine + H2O = an [RNA]-3'-cytidine-3'-phosphate + a 5'-hydroxy-ribonucleotide-3'-[RNA].. It catalyses the reaction an [RNA] containing uridine + H2O = an [RNA]-3'-uridine-3'-phosphate + a 5'-hydroxy-ribonucleotide-3'-[RNA].. Endonuclease that catalyzes the cleavage of RNA on the 3' side of pyrimidine nucleotides. Acts on single-stranded and double-stranded RNA. In Ateles geoffroyi (Black-handed spider monkey), this protein is Ribonuclease pancreatic (RNASE1).